Consider the following 71-residue polypeptide: Small ribosomal subunit protein eS17 (71 aa).

Belongs to the eukaryotic ribosomal protein eS17 family.

The sequence is that of Small ribosomal subunit protein eS17 from Pyrobaculum islandicum (strain DSM 4184 / JCM 9189 / GEO3).